The following is a 596-amino-acid chain: MKSLSFISLACLTAVHAASVTFKVIAPTAESSVQVNINGQLTQLKAQDEDIPYYTGSAELNDGQSYKYVVDGAAETFERILNGTSTKNEFFNRPITYATNIPELPNILSEGSWTRGETTDPLWDSNYVPSIFVTGKSDEMEDLITNVTKKTYQAKITFIGPENITTIENCTFGLHKPGRKHNDAKQTWVWTLPEGQYVAKRSWFKIRHMEEDPTQLREKLYADIARKMGTYANEANMVRFFINKEGMGTFNMLDDVIMYSYINAMFYNGNPPQQLGALYDGASGAAFNASGDMDSFIPNVESPLDQDALMPFSKAFAAVDFSNDDQVKAISQYFDYDQFLRFMVMEFLTADWDGYWQEQTNDGAYIDVSDNNKVYYLAQDFDATFGVNLDQERDFVNTPYTDFPTKFPGGILINKLLENPTTKATFETYLKTTVQEIFNNATLGAYVTARHNFLAPDLKWDRSIKQRSPGNIFGWTYEQTYQNLFEGVTAPGKEQGGAEWGLLEWVAAKEKAVRSSLKLSETATTSTSATIAAPATSESASQDNTSDDTDSASTSSSTLNQAAADTSSASKSAPTFYCLQLVLYLSLSFKNLYKYI.

Residues 1 to 17 (MKSLSFISLACLTAVHA) form the signal peptide. Asn82, Asn146, Asn163, Asn169, Asn288, Asn440, and Asn544 each carry an N-linked (GlcNAc...) asparagine glycan. Residues 528–544 (SATIAAPATSESASQDN) show a composition bias toward low complexity. The segment at 528–557 (SATIAAPATSESASQDNTSDDTDSASTSSS) is disordered. The GPI-anchor amidated serine moiety is linked to residue Ser567. Positions 568-596 (SASKSAPTFYCLQLVLYLSLSFKNLYKYI) are cleaved as a propeptide — removed in mature form.

In terms of assembly, interacts with host integrin beta-1 ITGB1 on the cell surface of host alveolar epithelial cells.

It localises to the cell membrane. In terms of biological role, promotes invasion of host epithelial cells by adhering to receptors on the host cell surface to facilitate endocytosis of the pathogen into host cells. Probably binds integrin ITGA3:ITGB1 via ITGB1, on the cell surface of host alveolar epithelial cells. The sequence is that of Invasin CotH7 from Rhizopus delemar (strain RA 99-880 / ATCC MYA-4621 / FGSC 9543 / NRRL 43880) (Mucormycosis agent).